We begin with the raw amino-acid sequence, 225 residues long: Endonuclease V (225 aa).

Residues aspartate 43 and aspartate 110 each coordinate Mg(2+).

Belongs to the endonuclease V family. Mg(2+) is required as a cofactor.

The protein localises to the cytoplasm. It carries out the reaction Endonucleolytic cleavage at apurinic or apyrimidinic sites to products with a 5'-phosphate.. Its function is as follows. DNA repair enzyme involved in the repair of deaminated bases. Selectively cleaves double-stranded DNA at the second phosphodiester bond 3' to a deoxyinosine leaving behind the intact lesion on the nicked DNA. In Thermotoga sp. (strain RQ2), this protein is Endonuclease V.